The chain runs to 412 residues: uncharacterized protein (412 aa).

A run of 11 helical transmembrane segments spans residues 17 to 37 (LLLALALTMGVFAAGSEELVI), 54 to 74 (VLALSISIYGVMIFIGAPLLV), 91 to 111 (MIFIIGTVICALAQNIFFFFL), 112 to 132 (GRALSGLAAGAFVPTAYAVVG), 146 to 166 (LIVSSWSLALIFGVPLGSFIG), 173 to 193 (WTFWIFALMGVLVVLLILLEM), 225 to 245 (VYITITFCNMIGFYGMYSFLG), 257 to 277 (TAAGLFIMIYGIGFSMSVITG), 299 to 319 (LLACLPYAPASMFLLIASLFI), 346 to 366 (VMVFYSLASNLAVTLGSALMG), and 375 to 395 (AAVGLICAAITVLGFVLSVFA).

Belongs to the major facilitator superfamily.

The protein resides in the cell membrane. This is an uncharacterized protein from Bacillus subtilis (strain 168).